The sequence spans 246 residues: Pyridoxine 5'-phosphate synthase (246 aa).

Position 7 (Asn-7) interacts with 3-amino-2-oxopropyl phosphate. Asp-9 to His-10 contributes to the 1-deoxy-D-xylulose 5-phosphate binding site. Arg-18 serves as a coordination point for 3-amino-2-oxopropyl phosphate. His-43 functions as the Proton acceptor in the catalytic mechanism. Residues Arg-45 and His-50 each contribute to the 1-deoxy-D-xylulose 5-phosphate site. The Proton acceptor role is filled by Glu-70. 1-deoxy-D-xylulose 5-phosphate is bound at residue Thr-100. The active-site Proton donor is His-190. 3-amino-2-oxopropyl phosphate contacts are provided by residues Gly-191 and Gly-212–His-213.

This sequence belongs to the PNP synthase family. In terms of assembly, homooctamer; tetramer of dimers.

The protein localises to the cytoplasm. The catalysed reaction is 3-amino-2-oxopropyl phosphate + 1-deoxy-D-xylulose 5-phosphate = pyridoxine 5'-phosphate + phosphate + 2 H2O + H(+). It participates in cofactor biosynthesis; pyridoxine 5'-phosphate biosynthesis; pyridoxine 5'-phosphate from D-erythrose 4-phosphate: step 5/5. In terms of biological role, catalyzes the complicated ring closure reaction between the two acyclic compounds 1-deoxy-D-xylulose-5-phosphate (DXP) and 3-amino-2-oxopropyl phosphate (1-amino-acetone-3-phosphate or AAP) to form pyridoxine 5'-phosphate (PNP) and inorganic phosphate. The protein is Pyridoxine 5'-phosphate synthase of Prochlorococcus marinus (strain SARG / CCMP1375 / SS120).